A 375-amino-acid chain; its full sequence is Growth/differentiation factor 8 (375 aa).

An N-terminal signal peptide occupies residues 1 to 23; sequence MQKLAVYVYIYLFMQILVHPVAL. Positions 24-266 are excised as a propeptide; that stretch reads DGSSQPTENA…VTDTPKRSRR (243 aa). N-linked (GlcNAc...) asparagine glycosylation is present at asparagine 71. Intrachain disulfides connect cysteine 272–cysteine 282, cysteine 281–cysteine 340, cysteine 309–cysteine 372, and cysteine 313–cysteine 374.

The protein belongs to the TGF-beta family. Homodimer; disulfide-linked.

The protein resides in the secreted. Functionally, acts specifically as a negative regulator of skeletal muscle growth. The protein is Growth/differentiation factor 8 (MSTN) of Meleagris gallopavo (Wild turkey).